Consider the following 341-residue polypeptide: S-adenosylmethionine:tRNA ribosyltransferase-isomerase (341 aa).

The protein belongs to the QueA family. As to quaternary structure, monomer.

It localises to the cytoplasm. It catalyses the reaction 7-aminomethyl-7-carbaguanosine(34) in tRNA + S-adenosyl-L-methionine = epoxyqueuosine(34) in tRNA + adenine + L-methionine + 2 H(+). The protein operates within tRNA modification; tRNA-queuosine biosynthesis. Functionally, transfers and isomerizes the ribose moiety from AdoMet to the 7-aminomethyl group of 7-deazaguanine (preQ1-tRNA) to give epoxyqueuosine (oQ-tRNA). The polypeptide is S-adenosylmethionine:tRNA ribosyltransferase-isomerase (Trichlorobacter lovleyi (strain ATCC BAA-1151 / DSM 17278 / SZ) (Geobacter lovleyi)).